Here is a 364-residue protein sequence, read N- to C-terminus: Histidinol-phosphate aminotransferase (364 aa).

Lysine 224 bears the N6-(pyridoxal phosphate)lysine mark.

Belongs to the class-II pyridoxal-phosphate-dependent aminotransferase family. Histidinol-phosphate aminotransferase subfamily. As to quaternary structure, homodimer. Requires pyridoxal 5'-phosphate as cofactor.

The catalysed reaction is L-histidinol phosphate + 2-oxoglutarate = 3-(imidazol-4-yl)-2-oxopropyl phosphate + L-glutamate. The protein operates within amino-acid biosynthesis; L-histidine biosynthesis; L-histidine from 5-phospho-alpha-D-ribose 1-diphosphate: step 7/9. The protein is Histidinol-phosphate aminotransferase of Anaeromyxobacter sp. (strain Fw109-5).